The primary structure comprises 1765 residues: Tight junction protein ZO-1 (1765 aa).

Residues Thr23–Lys110 enclose the PDZ 1 domain. Residues Ala102–Val112 are compositionally biased toward basic residues. The tract at residues Ala102–Leu189 is disordered. The segment covering Pro123–Val136 has biased composition (acidic residues). Residue Ser125 is modified to Phosphoserine. At Tyr132 the chain carries Phosphotyrosine. Positions Arg149–Ser175 are enriched in basic and acidic residues. Ser175, Ser178, and Ser179 each carry phosphoserine. Position 185 is a phosphothreonine (Thr185). In terms of domain architecture, PDZ 2 spans Lys186–Glu264. Phosphoserine is present on residues Ser212 and Ser241. Position 267 is a phosphothreonine (Thr267). A phosphoserine mark is found at Ser275, Ser277, Ser280, Ser284, Ser290, Ser294, Ser297, Ser300, Ser323, Ser329, Ser334, Ser337, and Ser353. The segment at Ala296–Thr363 is disordered. Residues His299–Pro308 are compositionally biased toward basic and acidic residues. A compositionally biased stretch (polar residues) spans His325–Leu338. Residue Thr354 is modified to Phosphothreonine. The 82-residue stretch at Ser421 to Lys502 folds into the PDZ 3 domain. The region spanning Gly516–Ala584 is the SH3 domain. Residues Ser617 and Ser622 each carry the phosphoserine modification. Residues Tyr633 to Arg876 form an occludin (OCLN)-binding region region. In terms of domain architecture, Guanylate kinase-like spans Arg690–Gln791. Thr809 is subject to Phosphothreonine. Phosphoserine is present on residues Ser810 and Ser821. Tyr822 is subject to Phosphotyrosine. Phosphoserine occurs at positions 824, 828, and 837. Disordered regions lie at residues Ala825–Ser941 and Ala1023–Gln1042. Thr846, Thr848, Thr854, Thr861, and Thr868 each carry phosphothreonine. Positions Glu879–Asn892 are enriched in basic and acidic residues. Low complexity predominate over residues Gln893–Ala906. Ser912 carries the post-translational modification Phosphoserine. At Ser1071 the chain carries Phosphoserine. The tract at residues Ser1092 to Ser1585 is disordered. Residues Asp1106–Glu1124 are compositionally biased toward basic and acidic residues. Tyr1139 and Tyr1164 each carry phosphotyrosine. The actin-binding region (ABR) stretch occupies residues Arg1150–Pro1370. 2 stretches are compositionally biased toward basic and acidic residues: residues Lys1268 to Asn1285 and Pro1335 to Asp1346. Tyr1353 bears the Phosphotyrosine mark. Ser1365 is modified (phosphoserine). Positions Ser1388–Ser1399 are enriched in low complexity. Over residues Gly1401–Asp1418 the composition is skewed to basic and acidic residues. Phosphoserine is present on Ser1411. Polar residues-rich tracts occupy residues Asn1442–Ile1468 and Gly1509–Pro1519. The span at Pro1535–Lys1544 shows a compositional bias: basic and acidic residues. 2 positions are modified to phosphoserine: Ser1542 and Ser1614. The ZU5 domain occupies Ala1631 to Phe1765.

Belongs to the MAGUK family. As to quaternary structure, homodimer. Forms heterodimers TJP3. Forms a heterodimer (via PDZ2 domain) with TJP2/ZO2 (via PDZ2 domain). Interacts with OCLN. Interacts with CALM, claudins, CGN/cingulin, CXADR, GJA12, GJD3 and UBN1. Interacts (via ZU5 domain) with CDC42BPB and MYZAP. Interacts (via PDZ domain) with GJA1. Interacts (via PDZ domains) with ANKRD2. Interacts with BVES (via the C-terminus cytoplasmic tail). Interacts with HSPA4. Interacts with KIRREL1. Interacts with DLL1. Interacts with USP53 (via the C-terminal region). Interacts with DNMBP (via C-terminal domain); required for the apical cell-cell junction localization of DNMBP. Interacts with SPEF1. Interacts (via N-terminus) with CTNNA1. Interacts with CLDN18. Interacts with CLDN16 (via TRV motif); this is a prerequisite for anchoring of CLDN16 at the tight junction. Interacts with PKP1; the interaction facilitates TJP1/ZO-1 localization to the plasma membrane. Phosphorylated at tyrosine redidues in response to epidermal growth factor (EGF). This response is dependent on an intact actin microfilament system. Dephosphorylated by Ptprj.

It localises to the cell membrane. The protein localises to the cell junction. The protein resides in the tight junction. It is found in the gap junction. In terms of biological role, tjpP1, Tjp2, and Tjp3 are closely related scaffolding proteins that link tight junction (TJ) transmembrane proteins such as claudins, junctional adhesion molecules, and occludin to the actin cytoskeleton. The tight junction acts to limit movement of substances through the paracellular space and as a boundary between the compositionally distinct apical and basolateral plasma membrane domains of epithelial and endothelial cells. Necessary for lumenogenesis, and particularly efficient epithelial polarization and barrier formation. Plays a role in the regulation of cell migration by targeting Cdc42bpb to the leading edge of migrating cells. Plays an important role in podosome formation and associated function, thus regulating cell adhesion and matrix remodeling. With Tjp2 and Tjp3, participates in the junctional retention and stability of the transcription factor Dbpa, but is not involved in its shuttling to the nucleus. May play a role in mediating cell morphology changes during ameloblast differentiation via its role in tight junctions. This is Tight junction protein ZO-1 from Rattus norvegicus (Rat).